The following is a 276-amino-acid chain: UPF0276 protein PA4106 (276 aa).

The protein belongs to the UPF0276 family.

In Pseudomonas aeruginosa (strain ATCC 15692 / DSM 22644 / CIP 104116 / JCM 14847 / LMG 12228 / 1C / PRS 101 / PAO1), this protein is UPF0276 protein PA4106.